The chain runs to 279 residues: Movement protein (279 aa).

The protein belongs to the cucumovirus movement protein family.

The protein resides in the host cell junction. It is found in the host plasmodesma. Transports viral genome to neighboring plant cells directly through plasmosdesmata, without any budding. The movement protein allows efficient cell to cell propagation, by bypassing the host cell wall barrier. Acts by forming a tubular structure at the host plasmodesmata, enlarging it enough to allow free passage of virion capsids. This is Movement protein from Cucumber mosaic virus (strain As) (CMV).